The primary structure comprises 139 residues: Large ribosomal subunit protein uL14A (139 aa).

This sequence belongs to the universal ribosomal protein uL14 family. As to quaternary structure, component of the large ribosomal subunit (LSU). Mature yeast ribosomes consist of a small (40S) and a large (60S) subunit. The 40S small subunit contains 1 molecule of ribosomal RNA (18S rRNA) and at least 33 different proteins. The large 60S subunit contains 3 rRNA molecules (25S, 5.8S and 5S rRNA) and at least 46 different proteins.

The protein resides in the cytoplasm. The protein localises to the nucleus. Functionally, component of the ribosome, a large ribonucleoprotein complex responsible for the synthesis of proteins in the cell. The small ribosomal subunit (SSU) binds messenger RNAs (mRNAs) and translates the encoded message by selecting cognate aminoacyl-transfer RNA (tRNA) molecules. The large subunit (LSU) contains the ribosomal catalytic site termed the peptidyl transferase center (PTC), which catalyzes the formation of peptide bonds, thereby polymerizing the amino acids delivered by tRNAs into a polypeptide chain. The nascent polypeptides leave the ribosome through a tunnel in the LSU and interact with protein factors that function in enzymatic processing, targeting, and the membrane insertion of nascent chains at the exit of the ribosomal tunnel. In Schizosaccharomyces pombe (strain 972 / ATCC 24843) (Fission yeast), this protein is Large ribosomal subunit protein uL14A (rpl2301).